The following is a 53-amino-acid chain: Photosystem II reaction center protein K (53 aa).

Residues 1–16 (MLKFYLENVFHLIFFA) constitute a propeptide that is removed on maturation. Residues 28–48 (IVNVMPIIPLFFFLLAFVWQA) traverse the membrane as a helical segment.

This sequence belongs to the PsbK family. As to quaternary structure, PSII is composed of 1 copy each of membrane proteins PsbA, PsbB, PsbC, PsbD, PsbE, PsbF, PsbH, PsbI, PsbJ, PsbK, PsbL, PsbM, PsbT, PsbX, PsbY, PsbZ, Psb30/Ycf12, at least 3 peripheral proteins of the oxygen-evolving complex and a large number of cofactors. It forms dimeric complexes.

The protein resides in the plastid. It is found in the chloroplast thylakoid membrane. Its function is as follows. One of the components of the core complex of photosystem II (PSII). PSII is a light-driven water:plastoquinone oxidoreductase that uses light energy to abstract electrons from H(2)O, generating O(2) and a proton gradient subsequently used for ATP formation. It consists of a core antenna complex that captures photons, and an electron transfer chain that converts photonic excitation into a charge separation. This is Photosystem II reaction center protein K from Huperzia lucidula (Shining clubmoss).